Consider the following 82-residue polypeptide: Small ribosomal subunit protein bS16 (82 aa).

The protein belongs to the bacterial ribosomal protein bS16 family.

This is Small ribosomal subunit protein bS16 from Psychromonas ingrahamii (strain DSM 17664 / CCUG 51855 / 37).